We begin with the raw amino-acid sequence, 193 residues long: DNA damage-inducible transcript 4-like protein (193 aa).

Belongs to the DDIT4 family.

Its subcellular location is the cytoplasm. Its function is as follows. Inhibits cell growth by regulating the TOR signaling pathway upstream of the TSC1-TSC2 complex and downstream of AKT1. The polypeptide is DNA damage-inducible transcript 4-like protein (DDIT4L) (Bos taurus (Bovine)).